Reading from the N-terminus, the 462-residue chain is UDP-N-acetylmuramate--L-alanine ligase (462 aa).

112 to 118 contributes to the ATP binding site; that stretch reads GTHGKTT.

It belongs to the MurCDEF family.

The protein resides in the cytoplasm. The catalysed reaction is UDP-N-acetyl-alpha-D-muramate + L-alanine + ATP = UDP-N-acetyl-alpha-D-muramoyl-L-alanine + ADP + phosphate + H(+). The protein operates within cell wall biogenesis; peptidoglycan biosynthesis. Functionally, cell wall formation. This chain is UDP-N-acetylmuramate--L-alanine ligase, found in Geobacter sulfurreducens (strain ATCC 51573 / DSM 12127 / PCA).